A 249-amino-acid polypeptide reads, in one-letter code: Triosephosphate isomerase (249 aa).

The substrate site is built by N12 and K14. K14 bears the N6-acetyllysine mark. A Phosphoserine modification is found at S21. A 3'-nitrotyrosine modification is found at Y68. S80 carries the post-translational modification Phosphoserine. The active-site Electrophile is H96. Position 106 is a phosphoserine (S106). K142 participates in a covalent cross-link: Glycyl lysine isopeptide (Lys-Gly) (interchain with G-Cter in SUMO1). Residue K149 is modified to N6-succinyllysine. K156 bears the N6-acetyllysine; alternate mark. K156 carries the N6-succinyllysine; alternate modification. S159 is subject to Phosphoserine. E166 serves as the catalytic Proton acceptor. T173 is modified (phosphothreonine). K194 is subject to N6-acetyllysine; alternate. K194 carries the N6-succinyllysine; alternate modification. At K194 the chain carries N6-methyllysine; alternate. The residue at position 198 (S198) is a Phosphoserine. Residue Y209 is modified to 3'-nitrotyrosine. S212 carries the post-translational modification Phosphoserine. Residue T214 is modified to Phosphothreonine. S223 carries the phosphoserine modification. Residue K238 is modified to N6-acetyllysine.

The protein belongs to the triosephosphate isomerase family. As to quaternary structure, homodimer.

Its subcellular location is the cytoplasm. The enzyme catalyses D-glyceraldehyde 3-phosphate = dihydroxyacetone phosphate. It catalyses the reaction dihydroxyacetone phosphate = methylglyoxal + phosphate. It participates in carbohydrate degradation; glycolysis; D-glyceraldehyde 3-phosphate from glycerone phosphate: step 1/1. Its pathway is carbohydrate biosynthesis; gluconeogenesis. Its function is as follows. Triosephosphate isomerase is an extremely efficient metabolic enzyme that catalyzes the interconversion between dihydroxyacetone phosphate (DHAP) and D-glyceraldehyde-3-phosphate (G3P) in glycolysis and gluconeogenesis. It is also responsible for the non-negligible production of methylglyoxal a reactive cytotoxic side-product that modifies and can alter proteins, DNA and lipids. The protein is Triosephosphate isomerase (TPI1) of Homo sapiens (Human).